Reading from the N-terminus, the 178-residue chain is PEST proteolytic signal-containing nuclear protein (178 aa).

Residues 1 to 15 (MADGKAGEEKPEKPQ) show a composition bias toward basic and acidic residues. The disordered stretch occupies residues 1–82 (MADGKAGEEK…FAIGSQTARK (82 aa)). Ala-2 bears the N-acetylalanine mark. Over residues 37–47 (SSSNGGESSSR) the composition is skewed to low complexity. A Phosphoserine modification is found at Ser-53. Position 64 is an N6-acetyllysine (Lys-64). Phosphoserine occurs at positions 77, 87, and 119. Residues 134–158 (NIGRDTPTSAGPNSFNKGKHGFSDN) are disordered. A Phosphothreonine modification is found at Thr-139. Residues 139 to 149 (TPTSAGPNSFN) show a composition bias toward polar residues. Position 147 is a phosphoserine (Ser-147). Lys-150 and Lys-152 each carry N6-acetyllysine.

As to quaternary structure, interacts with UHRF2/NIRF. Ubiquitinated; mediated by UHRF2 and leading to its subsequent proteasomal degradation. In terms of processing, N-terminally acetylated in a HYPK-dependent manner by the NatA acetyltransferase complex which is composed of NAA10 and NAA15.

The protein localises to the nucleus. In terms of biological role, may be involved in cell cycle regulation. In Mus musculus (Mouse), this protein is PEST proteolytic signal-containing nuclear protein (Pcnp).